The sequence spans 112 residues: UPF0212 protein Mboo_1659 (112 aa).

It belongs to the UPF0212 family.

The protein is UPF0212 protein Mboo_1659 of Methanoregula boonei (strain DSM 21154 / JCM 14090 / 6A8).